The chain runs to 617 residues: Proline--tRNA ligase (617 aa).

The protein belongs to the class-II aminoacyl-tRNA synthetase family. ProS type 1 subfamily. Homodimer.

It is found in the cytoplasm. It carries out the reaction tRNA(Pro) + L-proline + ATP = L-prolyl-tRNA(Pro) + AMP + diphosphate. Catalyzes the attachment of proline to tRNA(Pro) in a two-step reaction: proline is first activated by ATP to form Pro-AMP and then transferred to the acceptor end of tRNA(Pro). As ProRS can inadvertently accommodate and process non-cognate amino acids such as alanine and cysteine, to avoid such errors it has two additional distinct editing activities against alanine. One activity is designated as 'pretransfer' editing and involves the tRNA(Pro)-independent hydrolysis of activated Ala-AMP. The other activity is designated 'posttransfer' editing and involves deacylation of mischarged Ala-tRNA(Pro). The misacylated Cys-tRNA(Pro) is not edited by ProRS. The sequence is that of Proline--tRNA ligase from Streptococcus pneumoniae (strain ATCC BAA-255 / R6).